We begin with the raw amino-acid sequence, 155 residues long: Large ribosomal subunit protein eL24 (155 aa).

Residues 87-155 form a disordered region; that stretch reads LELIKERRSQ…SFQKVKATSR (69 aa). Basic and acidic residues predominate over residues 89-129; sequence LIKERRSQKPSDRKAARDSKLAKDKEAKKAAKAARKAEKAK. The span at 130–143 shows a compositional bias: low complexity; that stretch reads AVASGASVVSKQQA.

It belongs to the eukaryotic ribosomal protein eL24 family. As to quaternary structure, component of the large ribosomal subunit. Mature ribosomes consist of a small (40S) and a large (60S) subunit. The 40S subunit contains about 32 different proteins and 1 molecule of RNA (18S). The 60S subunit contains 45 different proteins and 3 molecules of RNA (25S, 5.8S and 5S).

It is found in the cytoplasm. In terms of biological role, component of the ribosome, a large ribonucleoprotein complex responsible for the synthesis of proteins in the cell. The small ribosomal subunit (SSU) binds messenger RNAs (mRNAs) and translates the encoded message by selecting cognate aminoacyl-transfer RNA (tRNA) molecules. The large subunit (LSU) contains the ribosomal catalytic site termed the peptidyl transferase center (PTC), which catalyzes the formation of peptide bonds, thereby polymerizing the amino acids delivered by tRNAs into a polypeptide chain. The nascent polypeptides leave the ribosome through a tunnel in the LSU and interact with protein factors that function in enzymatic processing, targeting, and the membrane insertion of nascent chains at the exit of the ribosomal tunnel. The sequence is that of Large ribosomal subunit protein eL24 from Candida albicans (strain SC5314 / ATCC MYA-2876) (Yeast).